The following is a 188-amino-acid chain: MKISANSIRTGNILVYNNDLWVVSKTPEHTQPGKGGAYVQVEMKNLKTGTKRNGRFSSSDYLEKAELEQKDCQFLYFEGNNLVLMDTKHFDQINVPKEILEAKLPFLTENMIVKVEFYNDKPLTIVLPPTVILAISETDPVIKGATVTSSYKPAILENGIKVKVPQYLAIGEKIVVKTDDMTYVERAK.

The protein belongs to the elongation factor P family.

The protein localises to the cytoplasm. Its pathway is protein biosynthesis; polypeptide chain elongation. In terms of biological role, involved in peptide bond synthesis. Stimulates efficient translation and peptide-bond synthesis on native or reconstituted 70S ribosomes in vitro. Probably functions indirectly by altering the affinity of the ribosome for aminoacyl-tRNA, thus increasing their reactivity as acceptors for peptidyl transferase. The polypeptide is Elongation factor P (Rickettsia typhi (strain ATCC VR-144 / Wilmington)).